The following is a 133-amino-acid chain: Probable 4-amino-4-deoxy-L-arabinose-phosphoundecaprenol flippase subunit ArnF (133 aa).

Residues 1–5 lie on the Cytoplasmic side of the membrane; the sequence is MKTGY. Residues 6-26 form a helical membrane-spanning segment; sequence LWAIASALLVTVAQLLLKIGM. The Periplasmic portion of the chain corresponds to 27-47; it reads SELPDLQLEKQWFDLHWLWAN. The helical transmembrane segment at 48–68 threads the bilayer; the sequence is IIPISVVFVGLIGYVLSMVCW. One can recognise an EamA domain in the interval 51–125; sequence ISVVFVGLIG…IMLGVWLISQ (75 aa). Over 69–80 the chain is Cytoplasmic; sequence LLTLRTIPLNKA. The chain crosses the membrane as a helical span at residues 81 to 101; it reads YPLISLSYVFVYILAVVLPWF. The Periplasmic portion of the chain corresponds to 102–103; it reads QE. A helical transmembrane segment spans residues 104–124; it reads TLSWSKTIGIIFIMLGVWLIS. At 125–133 the chain is on the cytoplasmic side; the sequence is QKTEQTTSH.

It belongs to the ArnF family. As to quaternary structure, heterodimer of ArnE and ArnF.

The protein resides in the cell inner membrane. Its pathway is bacterial outer membrane biogenesis; lipopolysaccharide biosynthesis. Its function is as follows. Translocates 4-amino-4-deoxy-L-arabinose-phosphoundecaprenol (alpha-L-Ara4N-phosphoundecaprenol) from the cytoplasmic to the periplasmic side of the inner membrane. This is Probable 4-amino-4-deoxy-L-arabinose-phosphoundecaprenol flippase subunit ArnF from Proteus mirabilis (strain HI4320).